A 487-amino-acid chain; its full sequence is ATP synthase subunit beta (487 aa).

ATP is bound at residue Gly-164–Thr-171.

The protein belongs to the ATPase alpha/beta chains family. In terms of assembly, F-type ATPases have 2 components, CF(1) - the catalytic core - and CF(0) - the membrane proton channel. CF(1) has five subunits: alpha(3), beta(3), gamma(1), delta(1), epsilon(1). CF(0) has four main subunits: a(1), b(1), b'(1) and c(9-12).

It is found in the cellular thylakoid membrane. The catalysed reaction is ATP + H2O + 4 H(+)(in) = ADP + phosphate + 5 H(+)(out). In terms of biological role, produces ATP from ADP in the presence of a proton gradient across the membrane. The catalytic sites are hosted primarily by the beta subunits. In Synechococcus sp. (strain CC9311), this protein is ATP synthase subunit beta.